The primary structure comprises 453 residues: Ribosome biogenesis protein YTM1 (453 aa).

Residues 8–89 (VKLRFFTREQ…ETFLNVEYTR (82 aa)) are ubiquitin-like (UBL) domain. The segment at 99-453 (SFSNEDWVSS…INKGDNIFKS (355 aa)) is sufficient for interaction with ERB1 and association with 66S pre-ribosomes. 7 WD repeats span residues 101–139 (SNED…EKQY), 141–179 (GHSA…LKQP), 199–237 (GHKA…MTVV), 278–318 (SHTG…CIDT), 320–359 (TTSY…TSKI), 366–406 (GHKN…PMYT), and 417–453 (GVND…IFKS).

The protein belongs to the WD repeat WDR12/YTM1 family. As to quaternary structure, component of the NOP7 complex, composed of ERB1, NOP7 and YTM1. The complex is held together by ERB1, which interacts with NOP7 via its N-terminal domain and with YTM1 via a high-affinity interaction between the seven-bladed beta-propeller domains of the 2 proteins. The NOP7 complex associates with the 66S pre-ribosome. Interacts (via UBL domain) with MDN1 (via VWFA/MIDAS domain).

The protein localises to the nucleus. It is found in the nucleolus. Its subcellular location is the nucleoplasm. Functionally, component of the NOP7 complex, which is required for maturation of the 25S and 5.8S ribosomal RNAs and formation of the 60S ribosome. The protein is Ribosome biogenesis protein YTM1 of Vanderwaltozyma polyspora (strain ATCC 22028 / DSM 70294 / BCRC 21397 / CBS 2163 / NBRC 10782 / NRRL Y-8283 / UCD 57-17) (Kluyveromyces polysporus).